Here is a 902-residue protein sequence, read N- to C-terminus: Glutamate receptor 4 (902 aa).

Residues 1–20 form the signal peptide; the sequence is MRIICRQIVLLFSGFWGLAM. Residues 22-544 lie on the Extracellular side of the membrane; that stretch reads AFPSSVQIGG…GVFSFLDPLA (523 aa). Residues N52, N56, N258, N371, N407, and N414 are each glycosylated (N-linked (GlcNAc...) asparagine). C84 and C331 form a disulfide bridge. 3 residues coordinate L-glutamate: P500, T502, and R507. Residues 545–565 traverse the membrane as a helical segment; sequence YEIWMCIVFAYIGVSVVLFLV. Residues 566-592 lie on the Cytoplasmic side of the membrane; sequence SRFSPYEWHTEEPEDGKEGPSDQPPNE. The helical; Pore-forming intramembrane region spans 593 to 608; sequence FGIFNSLWFSLGAFMQ. The stretch at 609–611 is an intramembrane region; sequence QGC. A lipid anchor (S-palmitoyl cysteine) is attached at C611. Residues 612-617 are Cytoplasmic-facing; that stretch reads DISPRS. The chain crosses the membrane as a helical span at residues 618–638; it reads LSGRIVGGVWWFFTLIIISSY. Residues 639-813 are Extracellular-facing; that stretch reads TANLAAFLTV…DKTSALSLSN (175 aa). Positions 676, 677, and 727 each coordinate L-glutamate. An intrachain disulfide couples C740 to C795. Residues 814 to 834 form a helical membrane-spanning segment; sequence VAGVFYILVGGLGLAMLVALI. Over 835 to 902 the chain is Cytoplasmic; the sequence is EFCYKSRAEA…GLAVIASDLP (68 aa). C837 carries S-palmitoyl cysteine lipidation. S862 is subject to Phosphoserine; by PKC/PRKCG.

It belongs to the glutamate-gated ion channel (TC 1.A.10.1) family. GRIA4 subfamily. In terms of assembly, homotetramer or heterotetramer of pore-forming glutamate receptor subunits. Tetramers may be formed by the dimerization of dimers. Interacts with EPB41L1 via its C-terminus. Isoform 3 interacts with PICK1. Found in a complex with GRIA1, GRIA2, GRIA3, CNIH2, CNIH3, CACNG2, CACNG3, CACNG4, CACNG5, CACNG7 and CACNG8. Interacts with CACNG5 and PRKCG. Found in a complex with GRIA1, GRIA2, GRIA3, DLG4, CACNG8 and CNIH2. Post-translationally, palmitoylated. Depalmitoylated upon L-glutamate stimulation. ZDHHC3/GODZ specifically palmitoylates Cys-611, which leads to Golgi retention and decreased cell surface expression. In contrast, Cys-837 palmitoylation does not affect cell surface expression but regulates stimulation-dependent endocytosis. Phosphorylated at Ser-862 by PRKCG; phosphorylation increases plasma membrane-associated GRI4 expression. Detected in cerebellum.

It localises to the cell membrane. The protein localises to the postsynaptic cell membrane. It is found in the cell projection. Its subcellular location is the dendrite. It catalyses the reaction Ca(2+)(in) = Ca(2+)(out). The enzyme catalyses Na(+)(in) = Na(+)(out). It carries out the reaction Mg(2+)(in) = Mg(2+)(out). In terms of biological role, ionotropic glutamate receptor that functions as a ligand-gated cation channel, gated by L-glutamate and glutamatergic agonists such as alpha-amino-3-hydroxy-5-methyl-4-isoxazolepropionic acid (AMPA), quisqualic acid, and kainic acid. L-glutamate acts as an excitatory neurotransmitter at many synapses in the central nervous system and plays an important role in fast excitatory synaptic transmission. Binding of the excitatory neurotransmitter L-glutamate induces a conformation change, leading to the opening of the cation channel, and thereby converts the chemical signal to an electrical impulse upon entry of monovalent and divalent cations such as sodium and calcium. The receptor then desensitizes rapidly and enters a transient inactive state, characterized by the presence of bound agonist. In the presence of CACNG8, shows resensitization which is characterized by a delayed accumulation of current flux upon continued application of L-glutamate. The polypeptide is Glutamate receptor 4 (Rattus norvegicus (Rat)).